We begin with the raw amino-acid sequence, 325 residues long: Beta-ketoacyl-[acyl-carrier-protein] synthase III (325 aa).

Active-site residues include Cys116 and His252. The tract at residues 253–257 is ACP-binding; that stretch reads QANLR. Asn282 is an active-site residue.

This sequence belongs to the thiolase-like superfamily. FabH family. In terms of assembly, homodimer.

The protein resides in the cytoplasm. It catalyses the reaction malonyl-[ACP] + acetyl-CoA + H(+) = 3-oxobutanoyl-[ACP] + CO2 + CoA. The protein operates within lipid metabolism; fatty acid biosynthesis. Functionally, catalyzes the condensation reaction of fatty acid synthesis by the addition to an acyl acceptor of two carbons from malonyl-ACP. Catalyzes the first condensation reaction which initiates fatty acid synthesis and may therefore play a role in governing the total rate of fatty acid production. Possesses both acetoacetyl-ACP synthase and acetyl transacylase activities. Its substrate specificity determines the biosynthesis of branched-chain and/or straight-chain of fatty acids. This Xanthomonas oryzae pv. oryzae (strain MAFF 311018) protein is Beta-ketoacyl-[acyl-carrier-protein] synthase III.